A 221-amino-acid polypeptide reads, in one-letter code: Small ribosomal subunit protein uS3 (221 aa).

One can recognise a KH type-2 domain in the interval leucine 39–arginine 107.

This sequence belongs to the universal ribosomal protein uS3 family. As to quaternary structure, part of the 30S ribosomal subunit. Forms a tight complex with proteins S10 and S14.

Its function is as follows. Binds the lower part of the 30S subunit head. Binds mRNA in the 70S ribosome, positioning it for translation. The sequence is that of Small ribosomal subunit protein uS3 from Bdellovibrio bacteriovorus (strain ATCC 15356 / DSM 50701 / NCIMB 9529 / HD100).